Reading from the N-terminus, the 232-residue chain is Peroxisomal protein PEX21 (232 aa).

Residue Cys5 forms a Glycyl cysteine thioester (Cys-Gly) (interchain with G-Cter in ubiquitin) linkage.

This sequence belongs to the peroxin-21 family. As to quaternary structure, interacts with PEX7. Monoubiquitinated at Cys-5; acts as a signal for PEX21 extraction and is required for proper export from peroxisomes and recycling.

The protein localises to the cytoplasm. It is found in the cytosol. It localises to the peroxisome. Mediates peroxisomal import of proteins containing a C-terminal PTS2-type peroxisomal targeting signal via its interaction with PEX7. Interaction with PEX7 only takes place when PEX7 is associated with cargo proteins containing a PTS2 peroxisomal targeting signal. PEX7 along with PTS2-containing cargo proteins are then translocated through the PEX13-PEX14 docking complex together with PEX21. This chain is Peroxisomal protein PEX21 (PEX21), found in Candida glabrata (strain ATCC 2001 / BCRC 20586 / JCM 3761 / NBRC 0622 / NRRL Y-65 / CBS 138) (Yeast).